The primary structure comprises 920 residues: Protein O-mannosyl-transferase TMTC3 (920 aa).

Over 1–14 the chain is Cytoplasmic; sequence MLEGKMADINFKEV. The helical transmembrane segment at 15–35 threads the bilayer; sequence TLIVSVVAACYWNSLFCGFVF. Topologically, residues 36 to 94 are extracellular; that stretch reads DDVSAILDNKDLHPSTPLKTLFQNDFWGTPMSEERSHKSYRPLTVLTFRLNYLLSELKP. The helical transmembrane segment at 95 to 115 threads the bilayer; it reads MSYHLLNTVFHAVVSVIFLKV. Residues 116–125 lie on the Cytoplasmic side of the membrane; it reads CRLFLDKRSS. Helical transmembrane passes span 126-144 and 145-163; these read MIAA…AVTG and VVGR…AFLS. At 164–171 the chain is on the cytoplasmic side; the sequence is YTKSKGPD. A helical transmembrane segment spans residues 172–192; it reads NSIVWTPIVLTVFLVAVATLC. Residues 193 to 198 are Extracellular-facing; it reads KEQGIT. A helical transmembrane segment spans residues 199–219; sequence VVGICCVYEVFVAQGYTLPML. The Cytoplasmic segment spans residues 220–236; it reads CTVAGQFLRGKGSIPLS. The helical transmembrane segment at 237-257 threads the bilayer; it reads MLQTLVKLIVLMLSTLLLVVV. Topologically, residues 258–325 are extracellular; sequence RVQVIQSQLP…LIESFLDVRN (68 aa). Residues 326–346 form a helical membrane-spanning segment; the sequence is LATFAFFCFLGALGIFSLRYP. Residues 347–358 are Cytoplasmic-facing; it reads GDSSKTVLMALC. Residues 359 to 379 traverse the membrane as a helical segment; that stretch reads LMALPFIPASNLFFPVGFVVA. Over 380–381 the chain is Extracellular; that stretch reads ER. Residues 382-402 traverse the membrane as a helical segment; it reads VLYVPSMGFCILVAHGWQKIS. Residues 403 to 409 lie on the Cytoplasmic side of the membrane; the sequence is NKSVLKK. Residues 410–428 traverse the membrane as a helical segment; it reads LSWVCLSMVILTHALKTLH. At 429–920 the chain is on the extracellular side; sequence RNWDWESEYT…EEIERILNGE (492 aa). 9 TPR repeats span residues 451–484, 485–518, 534–567, 568–601, 602–635, 673–706, 707–740, 742–775, and 776–809; these read AKLW…QPDD, IGAH…MPQI, NVYI…RPDF, KQAY…DRNN, ADLW…NPKH, ANGY…QPDF, RSAL…YPDH, KGLI…DPSN, and VQGK…APHE. Residue Asn499 is glycosylated (N-linked (GlcNAc...) asparagine). Tyr508 is modified (phosphotyrosine). Asn546 is a glycosylation site (N-linked (GlcNAc...) asparagine). The disordered stretch occupies residues 829–897; sequence VEQPLAPADK…APHKTTKDIK (69 aa). A compositionally biased stretch (basic and acidic residues) spans 840–858; sequence PGTEEREEIPSEDVKEISS. Positions 867 to 880 are enriched in low complexity; sequence KTNNNRNSKSNKQS. A compositionally biased stretch (basic and acidic residues) spans 887-897; the sequence is DAPHKTTKDIK.

Belongs to the TMTC family.

Its subcellular location is the membrane. The protein resides in the endoplasmic reticulum. The enzyme catalyses a di-trans,poly-cis-dolichyl beta-D-mannosyl phosphate + L-seryl-[protein] = 3-O-(alpha-D-mannosyl)-L-seryl-[protein] + a di-trans,poly-cis-dolichyl phosphate + H(+). It catalyses the reaction a di-trans,poly-cis-dolichyl beta-D-mannosyl phosphate + L-threonyl-[protein] = 3-O-(alpha-D-mannosyl)-L-threonyl-[protein] + a di-trans,poly-cis-dolichyl phosphate + H(+). The protein operates within protein modification; protein glycosylation. Its function is as follows. Transfers mannosyl residues to the hydroxyl group of serine or threonine residues. The 4 members of the TMTC family are O-mannosyl-transferases dedicated primarily to the cadherin superfamily, each member seems to have a distinct role in decorating the cadherin domains with O-linked mannose glycans at specific regions. Also acts as O-mannosyl-transferase on other proteins such as PDIA3. Involved in the positive regulation of proteasomal protein degradation in the endoplasmic reticulum (ER), and the control of ER stress response. This is Protein O-mannosyl-transferase TMTC3 from Mus musculus (Mouse).